The following is a 1409-amino-acid chain: DNA-directed RNA polymerase subunit beta' (1409 aa).

Residues Cys-69, Cys-71, Cys-84, and Cys-87 each coordinate Zn(2+). Mg(2+) is bound by residues Asp-461, Asp-463, and Asp-465. Residues Cys-805, Cys-879, Cys-886, and Cys-889 each coordinate Zn(2+).

It belongs to the RNA polymerase beta' chain family. As to quaternary structure, the RNAP catalytic core consists of 2 alpha, 1 beta, 1 beta' and 1 omega subunit. When a sigma factor is associated with the core the holoenzyme is formed, which can initiate transcription. The cofactor is Mg(2+). Requires Zn(2+) as cofactor.

It carries out the reaction RNA(n) + a ribonucleoside 5'-triphosphate = RNA(n+1) + diphosphate. Functionally, DNA-dependent RNA polymerase catalyzes the transcription of DNA into RNA using the four ribonucleoside triphosphates as substrates. The sequence is that of DNA-directed RNA polymerase subunit beta' from Anaplasma phagocytophilum (strain HZ).